Here is a 283-residue protein sequence, read N- to C-terminus: Hydrogenase expression/formation protein HoxQ (283 aa).

A disordered region spans residues 1–29 (MNDDLPILPPGFGPGSHGEEERPDCPSMP).

The protein belongs to the HupH/HyaF family.

This is Hydrogenase expression/formation protein HoxQ (hoxQ) from Azotobacter vinelandii.